The primary structure comprises 160 residues: MARNPRGGKQIVATNRKARHDYAIIELFEAGVALLGTEVKSLREGHASLADAFATVDSGEVWLRNMHIPEYQHGSWTNHDPRRNRKLLLHRRQIDTLVGKIRDGNLALVPLSLYFAEGKVKVELALARGKKLHDKRQDMARRDAQREVIRELGRRAKGML.

This sequence belongs to the SmpB family.

It localises to the cytoplasm. Its function is as follows. Required for rescue of stalled ribosomes mediated by trans-translation. Binds to transfer-messenger RNA (tmRNA), required for stable association of tmRNA with ribosomes. tmRNA and SmpB together mimic tRNA shape, replacing the anticodon stem-loop with SmpB. tmRNA is encoded by the ssrA gene; the 2 termini fold to resemble tRNA(Ala) and it encodes a 'tag peptide', a short internal open reading frame. During trans-translation Ala-aminoacylated tmRNA acts like a tRNA, entering the A-site of stalled ribosomes, displacing the stalled mRNA. The ribosome then switches to translate the ORF on the tmRNA; the nascent peptide is terminated with the 'tag peptide' encoded by the tmRNA and targeted for degradation. The ribosome is freed to recommence translation, which seems to be the essential function of trans-translation. The chain is SsrA-binding protein from Mycobacterium leprae (strain Br4923).